Reading from the N-terminus, the 785-residue chain is Phenylalanine--tRNA ligase beta subunit (785 aa).

The region spanning 39 to 148 is the tRNA-binding domain; the sequence is APAFSGVVIA…ADAPVGQSIR (110 aa). The B5 domain occupies 399 to 474; that stretch reads PKRQAVQLRA…RVYGYNNIPA (76 aa). Asp452, Asp458, Glu461, and Glu462 together coordinate Mg(2+). In terms of domain architecture, FDX-ACB spans 692 to 784; the sequence is SKFQPVRRDL…AASELGAQLR (93 aa).

The protein belongs to the phenylalanyl-tRNA synthetase beta subunit family. Type 1 subfamily. Tetramer of two alpha and two beta subunits. Mg(2+) is required as a cofactor.

Its subcellular location is the cytoplasm. The catalysed reaction is tRNA(Phe) + L-phenylalanine + ATP = L-phenylalanyl-tRNA(Phe) + AMP + diphosphate + H(+). The chain is Phenylalanine--tRNA ligase beta subunit from Chromobacterium violaceum (strain ATCC 12472 / DSM 30191 / JCM 1249 / CCUG 213 / NBRC 12614 / NCIMB 9131 / NCTC 9757 / MK).